Consider the following 56-residue polypeptide: Ovomucoid (56 aa).

The Kazal-like domain occupies 6–56 (VDCSDHPKPACLQEQKPLCGSDNKTYDNKCSFCNAVVDSNGTLTLSHFGKC). Disulfide bonds link Cys8–Cys38, Cys16–Cys35, and Cys24–Cys56. An N-linked (GlcNAc...) asparagine glycan is attached at Asn45.

The protein resides in the secreted. The protein is Ovomucoid of Pipile pipile (Trinidad piping guan).